A 1373-amino-acid chain; its full sequence is DNA-directed RNA polymerase subunit beta'' (1373 aa).

Zn(2+) is bound by residues Cys220, Cys291, Cys298, and Cys301.

This sequence belongs to the RNA polymerase beta' chain family. RpoC2 subfamily. As to quaternary structure, in plastids the minimal PEP RNA polymerase catalytic core is composed of four subunits: alpha, beta, beta', and beta''. When a (nuclear-encoded) sigma factor is associated with the core the holoenzyme is formed, which can initiate transcription. The cofactor is Zn(2+).

The protein resides in the plastid. It localises to the chloroplast. The catalysed reaction is RNA(n) + a ribonucleoside 5'-triphosphate = RNA(n+1) + diphosphate. DNA-dependent RNA polymerase catalyzes the transcription of DNA into RNA using the four ribonucleoside triphosphates as substrates. The sequence is that of DNA-directed RNA polymerase subunit beta'' from Silene latifolia (White campion).